The chain runs to 195 residues: Interferon tau (195 aa).

The signal sequence occupies residues 1–23 (MAFVLSLLMALVLASYSPGGSLG). 2 cysteine pairs are disulfide-bonded: cysteine 24–cysteine 122 and cysteine 52–cysteine 162.

It belongs to the alpha/beta interferon family. IFN-alphaII subfamily. As to expression, constitutively and exclusively expressed in the mononuclear cells of the extraembryonic trophectoderm.

It is found in the secreted. In terms of biological role, paracrine hormone primarily responsible for maternal recognition of pregnancy. Interacts with endometrial receptors, probably type I interferon receptors, and blocks estrogen receptor expression, preventing the estrogen-induced increase in oxytocin receptor expression in the endometrium. This results in the suppression of the pulsatile endometrial release of the luteolytic hormone prostaglandin F2-alpha, hindering the regression of the corpus luteum (luteolysis) and therefore a return to ovarian cyclicity. This, and a possible direct effect of IFN-tau on prostaglandin synthesis, leads in turn to continued ovarian progesterone secretion, which stimulates the secretion by the endometrium of the nutrients required for the growth of the conceptus. In summary, displays particularly high antiviral and antiproliferative potency concurrently with particular weak cytotoxicity, high antiluteolytic activity and immunomodulatory properties. In contrast with other IFNs, IFN-tau is not virally inducible. This is Interferon tau (IFNT) from Cervus elaphus (Red deer).